Here is a 167-residue protein sequence, read N- to C-terminus: Lipoprotein signal peptidase (167 aa).

A run of 4 helical transmembrane segments spans residues 8–28, 46–66, 68–88, and 101–121; these read TFLTLLLLASIDWVSKLVVLL, WGHFSFLIIPSFNEGAAFGLF, QYKIPLLIFRVCVILGLALFL, and VALTLILAGALGNVGDILLYG. Residues Asp125 and Asp143 contribute to the active site. A helical transmembrane segment spans residues 139-159; the sequence is FNLADAFISIGTLLLIGHLYF.

The protein belongs to the peptidase A8 family.

The protein localises to the cell inner membrane. It carries out the reaction Release of signal peptides from bacterial membrane prolipoproteins. Hydrolyzes -Xaa-Yaa-Zaa-|-(S,diacylglyceryl)Cys-, in which Xaa is hydrophobic (preferably Leu), and Yaa (Ala or Ser) and Zaa (Gly or Ala) have small, neutral side chains.. It participates in protein modification; lipoprotein biosynthesis (signal peptide cleavage). In terms of biological role, this protein specifically catalyzes the removal of signal peptides from prolipoproteins. The chain is Lipoprotein signal peptidase from Chlamydia trachomatis serovar A (strain ATCC VR-571B / DSM 19440 / HAR-13).